A 367-amino-acid chain; its full sequence is MSLADSVLAVNNDLPIRTDKSVHSGKVRSVYWLTDADSRRLIKTKGYNVPEDTPLAIMVISDRISAFDCIFHGEGGLKGIPGKGAALNAISNHWFKLFAENGLADSHILDIPHPFVWIVQKARPIKVEAICRQYITGSMWRAYSKGERVFCGITLPEGLEKDQKLPELLITPSTKGILTGIPGVPAQDDVNISRSDIEANYQAFGFEKVEDIDLYEKLLKDGFKVISKALADLDQVFVDTKFEFGYVTDQDGNSKLIYMDEVGTPDSSRIWDGAAYRDGKILENSKEGFRQFLLNHFPDPDILLNKDRMPEREALARDNALPLEAMMQVSRTYTGIAEKVTGAAIPLPANPKADIIKILREEYDLIV.

Belongs to the SAICAR synthetase family.

The catalysed reaction is 5-amino-1-(5-phospho-D-ribosyl)imidazole-4-carboxylate + L-aspartate + ATP = (2S)-2-[5-amino-1-(5-phospho-beta-D-ribosyl)imidazole-4-carboxamido]succinate + ADP + phosphate + 2 H(+). It participates in purine metabolism; IMP biosynthesis via de novo pathway; 5-amino-1-(5-phospho-D-ribosyl)imidazole-4-carboxamide from 5-amino-1-(5-phospho-D-ribosyl)imidazole-4-carboxylate: step 1/2. The chain is Phosphoribosylaminoimidazole-succinocarboxamide synthase from Shewanella oneidensis (strain ATCC 700550 / JCM 31522 / CIP 106686 / LMG 19005 / NCIMB 14063 / MR-1).